The primary structure comprises 382 residues: Anhydro-N-acetylmuramic acid kinase (382 aa).

9-16 (GTSLDGID) provides a ligand contact to ATP.

It belongs to the anhydro-N-acetylmuramic acid kinase family.

The enzyme catalyses 1,6-anhydro-N-acetyl-beta-muramate + ATP + H2O = N-acetyl-D-muramate 6-phosphate + ADP + H(+). Its pathway is amino-sugar metabolism; 1,6-anhydro-N-acetylmuramate degradation. It participates in cell wall biogenesis; peptidoglycan recycling. Functionally, catalyzes the specific phosphorylation of 1,6-anhydro-N-acetylmuramic acid (anhMurNAc) with the simultaneous cleavage of the 1,6-anhydro ring, generating MurNAc-6-P. Is required for the utilization of anhMurNAc either imported from the medium or derived from its own cell wall murein, and thus plays a role in cell wall recycling. In Bacillus cereus (strain AH187), this protein is Anhydro-N-acetylmuramic acid kinase.